A 299-amino-acid polypeptide reads, in one-letter code: Streptogrisin-B (299 aa).

An N-terminal signal peptide occupies residues 1 to 38 (MRIKRTSNRSNAARRVRTTAVLAGLAAVAALAVPTANA). Positions 39–114 (ETPRTFSANQ…ERTPGKFTKL (76 aa)) are excised as a propeptide. A disulfide bridge links C128 with C148. Residues H147, D177, and S255 each act as charge relay system in the active site. C249 and C276 are disulfide-bonded.

Belongs to the peptidase S1 family. As to quaternary structure, monomer.

The enzyme catalyses Hydrolysis of proteins with trypsin-like specificity.. Functionally, has a primary specificity for large aliphatic or aromatic amino acids. This chain is Streptogrisin-B (sprB), found in Streptomyces griseus.